A 108-amino-acid polypeptide reads, in one-letter code: Nucleoid-associated protein Mpe_A2533 (108 aa).

The interval 86–108 is disordered; it reads TSEEKMGKLTAGMPLPPGMKLPF. A compositionally biased stretch (pro residues) spans 99-108; that stretch reads PLPPGMKLPF.

This sequence belongs to the YbaB/EbfC family. Homodimer.

Its subcellular location is the cytoplasm. It is found in the nucleoid. In terms of biological role, binds to DNA and alters its conformation. May be involved in regulation of gene expression, nucleoid organization and DNA protection. The chain is Nucleoid-associated protein Mpe_A2533 from Methylibium petroleiphilum (strain ATCC BAA-1232 / LMG 22953 / PM1).